We begin with the raw amino-acid sequence, 383 residues long: Mannitol-1-phosphate 5-dehydrogenase (383 aa).

Residue 3–14 (ALHFGAGNIGRG) coordinates NAD(+).

This sequence belongs to the mannitol dehydrogenase family.

It catalyses the reaction D-mannitol 1-phosphate + NAD(+) = beta-D-fructose 6-phosphate + NADH + H(+). In Serratia proteamaculans (strain 568), this protein is Mannitol-1-phosphate 5-dehydrogenase.